Here is a 941-residue protein sequence, read N- to C-terminus: Pre-mRNA-processing factor 6 (941 aa).

Residues 1-79 form a disordered region; it reads MNKKKKPFLG…DEDLNDTNYD (79 aa). A compositionally biased stretch (basic and acidic residues) spans 39–65; it reads DANDPVDDRHAPPGKRTVGDQMKKNQA. Residues 66-78 show a composition bias toward acidic residues; it reads ADDDDEDLNDTNY. Phosphoserine is present on Ser-143. Residues Thr-180, Thr-266, and Thr-275 each carry the phosphothreonine modification. Ser-279 carries the phosphoserine modification. 9 HAT repeats span residues 384-416, 418-444, 445-476, 554-586, 588-620, 622-654, 689-721, 723-755, and 855-887; these read TDIRAKKRVLRKALEHVPNSVRLWKAAVELEEP, DARIMLSRAVECCPTSVELWLALARLE, TYENARKVLNKARENIPTDRHIWITAAKLEEA, NALECARAIYAYALQVFPSKKSVWLRAAYFEKN, GTRESLEALLQRAVAHCPKAEVLWLMGAKSKWL, GDVPAARSILALAFQANPNSEEIWLAAVKLESE, DNIRAAQDLCEEALRHYEDFPKLWMMKGQIEEQ, EMMEKAREAYNQGLKKCPHSTPLWLLLSRLEEK, and RKITKAREWFHRTVKIDSDLGDAWAFFYKFELQ.

As to quaternary structure, identified in the spliceosome B complex. Identified in the spliceosome C complex. Associates with the U5 snRNP particle. Component of the U4/U6-U5 tri-snRNP complex composed of the U4, U6 and U5 snRNAs and at least PRPF3, PRPF4, PRPF6, PRPF8, PRPF31, SNRNP200, TXNL4A, SNRNP40, DDX23, CD2BP2, PPIH, SNU13, EFTUD2, SART1 and USP39, LSm proteins LSm2-8 and Sm proteins. Interacts with ARAF. Interacts with AR and NR3C1, but not ESR1, independently of the presence of hormones. Interacts with USH1G. In terms of processing, phosphorylated by PRP4K during spliceosome assembly. In terms of tissue distribution, widely expressed.

The protein localises to the nucleus. The protein resides in the nucleoplasm. It localises to the nucleus speckle. In terms of biological role, involved in pre-mRNA splicing as component of the U4/U6-U5 tri-snRNP complex, one of the building blocks of the spliceosome. Enhances dihydrotestosterone-induced transactivation activity of AR, as well as dexamethasone-induced transactivation activity of NR3C1, but does not affect estrogen-induced transactivation. This is Pre-mRNA-processing factor 6 from Homo sapiens (Human).